Here is a 120-residue protein sequence, read N- to C-terminus: Small ribosomal subunit protein uS13 (120 aa).

Positions 93–120 are disordered; it reads RKGLPVRGQTTKNNARTRKGKKKTVGSK. Residues 107–120 are compositionally biased toward basic residues; it reads ARTRKGKKKTVGSK.

The protein belongs to the universal ribosomal protein uS13 family. As to quaternary structure, part of the 30S ribosomal subunit. Forms a loose heterodimer with protein S19. Forms two bridges to the 50S subunit in the 70S ribosome.

In terms of biological role, located at the top of the head of the 30S subunit, it contacts several helices of the 16S rRNA. In the 70S ribosome it contacts the 23S rRNA (bridge B1a) and protein L5 of the 50S subunit (bridge B1b), connecting the 2 subunits; these bridges are implicated in subunit movement. Contacts the tRNAs in the A and P-sites. The sequence is that of Small ribosomal subunit protein uS13 from Helicobacter pylori (strain P12).